We begin with the raw amino-acid sequence, 530 residues long: Glucose-6-phosphate isomerase (530 aa).

Glutamate 322 functions as the Proton donor in the catalytic mechanism. Catalysis depends on residues histidine 351 and lysine 455.

The protein belongs to the GPI family.

It is found in the cytoplasm. It carries out the reaction alpha-D-glucose 6-phosphate = beta-D-fructose 6-phosphate. The protein operates within carbohydrate biosynthesis; gluconeogenesis. Its pathway is carbohydrate degradation; glycolysis; D-glyceraldehyde 3-phosphate and glycerone phosphate from D-glucose: step 2/4. Functionally, catalyzes the reversible isomerization of glucose-6-phosphate to fructose-6-phosphate. The sequence is that of Glucose-6-phosphate isomerase from Citrifermentans bemidjiense (strain ATCC BAA-1014 / DSM 16622 / JCM 12645 / Bem) (Geobacter bemidjiensis).